A 315-amino-acid polypeptide reads, in one-letter code: Ectopic P granules protein 4 (315 aa).

The next 6 membrane-spanning stretches (helical) occupy residues 84–104, 113–133, 146–166, 190–210, 221–241, and 242–262; these read IGFLVLWQVCILILGLFFSFF, IGYILIIPIFFASRIIQALWF, LPPPPVVPFSSMLAGTLISAL, IVYLHMALLNSMYCFDYFFDG, IFESHWPYFLGFGTPLALACS, and ISSNMFVNSVIFALLFPFFII.

The protein belongs to the EI24 family. Expressed in pharyngeal and body wall muscles and intestine cells.

It is found in the cytoplasm. The protein resides in the membrane. Functionally, involved in autophagy. Thought to act in autophagasome and omegasome formation. In Caenorhabditis elegans, this protein is Ectopic P granules protein 4.